A 361-amino-acid polypeptide reads, in one-letter code: MNLLTTKIDLDAIAHNTRVLKQMAGPAKLMAVVKANAYNHGVEKVAPVIAAHGADAFGVATLAEAMQLRDIGISQEVLCWIWTPEQDFRAAIDRNIDLAVISPAHAKALIETDAEHIRVSIKIDSGLHRSGVDEQEWEGVFSALAAAPHIEVTGMFTHLACADEPENPETDRQIIAFRRALALARKHGLECPVNHVCNSPAFLTRSDLHMEMVRPGLAFYGLEPVAGLEHGLKPAMTWEAKVSVVKQIEAGQGTSYGLTWRAEDRGFVAVVPAGYADGMPRHAQGKFSVTIDGLDYPQVGRVCMDQFVISLGDNPHGVEAGAKAVIFGENGHDATDFAERLDTINYEVVCRPTGRTVRAYV.

Residue lysine 34 is the Proton acceptor; specific for D-alanine of the active site. Lysine 34 carries the N6-(pyridoxal phosphate)lysine modification. Arginine 129 provides a ligand contact to substrate. The Proton acceptor; specific for L-alanine role is filled by tyrosine 256. Methionine 304 serves as a coordination point for substrate.

It belongs to the alanine racemase family. As to quaternary structure, homodimer. It depends on pyridoxal 5'-phosphate as a cofactor.

The catalysed reaction is L-alanine = D-alanine. The protein operates within amino-acid biosynthesis; D-alanine biosynthesis; D-alanine from L-alanine: step 1/1. Catalyzes the interconversion of L-alanine and D-alanine. May also act on other amino acids. This chain is Alanine racemase (alr), found in Corynebacterium glutamicum (strain ATCC 13032 / DSM 20300 / JCM 1318 / BCRC 11384 / CCUG 27702 / LMG 3730 / NBRC 12168 / NCIMB 10025 / NRRL B-2784 / 534).